Consider the following 1226-residue polypeptide: DNA-directed RNA polymerase subunit beta (1226 aa).

The protein belongs to the RNA polymerase beta chain family. In terms of assembly, the RNAP catalytic core consists of 2 alpha, 1 beta, 1 beta' and 1 omega subunit. When a sigma factor is associated with the core the holoenzyme is formed, which can initiate transcription.

The enzyme catalyses RNA(n) + a ribonucleoside 5'-triphosphate = RNA(n+1) + diphosphate. In terms of biological role, DNA-dependent RNA polymerase catalyzes the transcription of DNA into RNA using the four ribonucleoside triphosphates as substrates. This chain is DNA-directed RNA polymerase subunit beta, found in Leptospira borgpetersenii serovar Hardjo-bovis (strain JB197).